A 209-amino-acid polypeptide reads, in one-letter code: UPF0174 protein jhp_1493 (209 aa).

It belongs to the UPF0174 family.

The polypeptide is UPF0174 protein jhp_1493 (Helicobacter pylori (strain J99 / ATCC 700824) (Campylobacter pylori J99)).